We begin with the raw amino-acid sequence, 461 residues long: Porin AaxA (461 aa).

The signal sequence occupies residues 1–22 (MSFRSVLLTALLSLSFTTTMQA).

It belongs to the OprB family.

It localises to the cell outer membrane. In terms of biological role, facilitates L-arginine uptake, as part of the AaxABC system. The arginine uptake by the bacterium in the macrophage may be a virulence factor against the host innate immune response. The chain is Porin AaxA (aaxA) from Chlamydia trachomatis serovar D (strain ATCC VR-885 / DSM 19411 / UW-3/Cx).